Reading from the N-terminus, the 139-residue chain is uncharacterized protein (139 aa).

A helical membrane pass occupies residues Phe43 to Leu59.

It is found in the membrane. This is an uncharacterized protein from Haemophilus influenzae (strain ATCC 51907 / DSM 11121 / KW20 / Rd).